A 157-amino-acid chain; its full sequence is 2-C-methyl-D-erythritol 2,4-cyclodiphosphate synthase (157 aa).

The a divalent metal cation site is built by aspartate 8 and histidine 10. 4-CDP-2-C-methyl-D-erythritol 2-phosphate contacts are provided by residues 8–10 and 34–35; these read DVH and HS. Histidine 42 contributes to the a divalent metal cation binding site. Residues 56–58, 61–65, 132–135, phenylalanine 139, and arginine 142 each bind 4-CDP-2-C-methyl-D-erythritol 2-phosphate; these read DIG, FPDNE, and TTTE.

It belongs to the IspF family. As to quaternary structure, homotrimer. It depends on a divalent metal cation as a cofactor.

The catalysed reaction is 4-CDP-2-C-methyl-D-erythritol 2-phosphate = 2-C-methyl-D-erythritol 2,4-cyclic diphosphate + CMP. The protein operates within isoprenoid biosynthesis; isopentenyl diphosphate biosynthesis via DXP pathway; isopentenyl diphosphate from 1-deoxy-D-xylulose 5-phosphate: step 4/6. Involved in the biosynthesis of isopentenyl diphosphate (IPP) and dimethylallyl diphosphate (DMAPP), two major building blocks of isoprenoid compounds. Catalyzes the conversion of 4-diphosphocytidyl-2-C-methyl-D-erythritol 2-phosphate (CDP-ME2P) to 2-C-methyl-D-erythritol 2,4-cyclodiphosphate (ME-CPP) with a corresponding release of cytidine 5-monophosphate (CMP). The chain is 2-C-methyl-D-erythritol 2,4-cyclodiphosphate synthase from Desulforamulus reducens (strain ATCC BAA-1160 / DSM 100696 / MI-1) (Desulfotomaculum reducens).